The sequence spans 136 residues: ATP synthase epsilon chain (136 aa).

Residues 88–136 (DASSAESDLQAARNEVSKMEGQPASADKVKAQQSLDRARARVQAAKNQD) form a disordered region.

Belongs to the ATPase epsilon chain family. As to quaternary structure, F-type ATPases have 2 components, CF(1) - the catalytic core - and CF(0) - the membrane proton channel. CF(1) has five subunits: alpha(3), beta(3), gamma(1), delta(1), epsilon(1). CF(0) has three main subunits: a, b and c.

The protein localises to the cellular thylakoid membrane. Its function is as follows. Produces ATP from ADP in the presence of a proton gradient across the membrane. The chain is ATP synthase epsilon chain from Synechococcus sp. (strain WH7803).